The following is a 432-amino-acid chain: Glutamate-1-semialdehyde 2,1-aminomutase 1 (432 aa).

Lys-272 carries the post-translational modification N6-(pyridoxal phosphate)lysine.

Belongs to the class-III pyridoxal-phosphate-dependent aminotransferase family. HemL subfamily. As to quaternary structure, homodimer. Requires pyridoxal 5'-phosphate as cofactor.

The protein localises to the cytoplasm. It carries out the reaction (S)-4-amino-5-oxopentanoate = 5-aminolevulinate. The protein operates within porphyrin-containing compound metabolism; protoporphyrin-IX biosynthesis; 5-aminolevulinate from L-glutamyl-tRNA(Glu): step 2/2. The sequence is that of Glutamate-1-semialdehyde 2,1-aminomutase 1 from Exiguobacterium sp. (strain ATCC BAA-1283 / AT1b).